Consider the following 335-residue polypeptide: Sphingomyelinase C (335 aa).

Residues 1–28 (MEKFKIIKTIPKICGAFIFLLFFTFLFG) form the signal peptide.

This sequence belongs to the neutral sphingomyelinase family.

It is found in the secreted. The enzyme catalyses a sphingomyelin + H2O = phosphocholine + an N-acylsphing-4-enine + H(+). Its function is as follows. Virulence factor that promotes intracellular proliferation by mediating the disruption of the phagocytic vacuole and the release of bacteria into the host cell cytosol. May act in concert with the phospholipases PlcA and PlcB and the hemolysin hly to mediate efficient escape from the vacuole. This is Sphingomyelinase C (smcL) from Listeria ivanovii.